Here is a 604-residue protein sequence, read N- to C-terminus: Aspartate--tRNA(Asp/Asn) ligase (604 aa).

Glu175 provides a ligand contact to L-aspartate. Residues 199-202 (QQFK) are aspartate. 2 residues coordinate L-aspartate: Arg221 and His456. 221-223 (RDE) contacts ATP. Glu496 serves as a coordination point for ATP. An L-aspartate-binding site is contributed by Arg503. 548–551 (GVDR) is an ATP binding site.

The protein belongs to the class-II aminoacyl-tRNA synthetase family. Type 1 subfamily. In terms of assembly, homodimer.

The protein localises to the cytoplasm. It carries out the reaction tRNA(Asx) + L-aspartate + ATP = L-aspartyl-tRNA(Asx) + AMP + diphosphate. Aspartyl-tRNA synthetase with relaxed tRNA specificity since it is able to aspartylate not only its cognate tRNA(Asp) but also tRNA(Asn). Reaction proceeds in two steps: L-aspartate is first activated by ATP to form Asp-AMP and then transferred to the acceptor end of tRNA(Asp/Asn). The protein is Aspartate--tRNA(Asp/Asn) ligase of Methylorubrum populi (strain ATCC BAA-705 / NCIMB 13946 / BJ001) (Methylobacterium populi).